We begin with the raw amino-acid sequence, 188 residues long: Large ribosomal subunit protein uL5 (188 aa).

It belongs to the universal ribosomal protein uL5 family. Part of the 50S ribosomal subunit; part of the 5S rRNA/L5/L18/L25 subcomplex. Contacts the 5S rRNA and the P site tRNA. Forms a bridge to the 30S subunit in the 70S ribosome.

Functionally, this is one of the proteins that bind and probably mediate the attachment of the 5S RNA into the large ribosomal subunit, where it forms part of the central protuberance. In the 70S ribosome it contacts protein S13 of the 30S subunit (bridge B1b), connecting the 2 subunits; this bridge is implicated in subunit movement. Contacts the P site tRNA; the 5S rRNA and some of its associated proteins might help stabilize positioning of ribosome-bound tRNAs. The polypeptide is Large ribosomal subunit protein uL5 (Aquifex aeolicus (strain VF5)).